Here is a 220-residue protein sequence, read N- to C-terminus: Probable septum site-determining protein MinC (220 aa).

The protein belongs to the MinC family. As to quaternary structure, interacts with MinD and FtsZ.

Cell division inhibitor that blocks the formation of polar Z ring septums. Rapidly oscillates between the poles of the cell to destabilize FtsZ filaments that have formed before they mature into polar Z rings. Prevents FtsZ polymerization. This is Probable septum site-determining protein MinC from Vibrio atlanticus (strain LGP32) (Vibrio splendidus (strain Mel32)).